Consider the following 180-residue polypeptide: ATP synthase subunit delta (180 aa).

This sequence belongs to the ATPase delta chain family. F-type ATPases have 2 components, F(1) - the catalytic core - and F(0) - the membrane proton channel. F(1) has five subunits: alpha(3), beta(3), gamma(1), delta(1), epsilon(1). F(0) has three main subunits: a(1), b(2) and c(10-14). The alpha and beta chains form an alternating ring which encloses part of the gamma chain. F(1) is attached to F(0) by a central stalk formed by the gamma and epsilon chains, while a peripheral stalk is formed by the delta and b chains.

The protein resides in the cell inner membrane. F(1)F(0) ATP synthase produces ATP from ADP in the presence of a proton or sodium gradient. F-type ATPases consist of two structural domains, F(1) containing the extramembraneous catalytic core and F(0) containing the membrane proton channel, linked together by a central stalk and a peripheral stalk. During catalysis, ATP synthesis in the catalytic domain of F(1) is coupled via a rotary mechanism of the central stalk subunits to proton translocation. Functionally, this protein is part of the stalk that links CF(0) to CF(1). It either transmits conformational changes from CF(0) to CF(1) or is implicated in proton conduction. In Cupriavidus necator (strain ATCC 17699 / DSM 428 / KCTC 22496 / NCIMB 10442 / H16 / Stanier 337) (Ralstonia eutropha), this protein is ATP synthase subunit delta.